A 1920-amino-acid polypeptide reads, in one-letter code: rRNA biogenesis protein RRP5 (1920 aa).

Residues 1 to 65 (MVVPQKKFAN…GTSLSKKERE (65 aa)) form a disordered region. S1 motif domains lie at 128 to 210 (GMKL…LSLR), 226 to 291 (GMVF…LSSD), 314 to 384 (GMMV…LTLS), 400 to 473 (GDIF…GTLK), 490 to 557 (GMVT…VTYK), 577 to 646 (GLVT…LSFM), 661 to 733 (GSIV…LSSK), 753 to 822 (NSVV…LSLK), 866 to 930 (GSLI…LSLR), 958 to 1031 (EVHQ…LLLD), 1054 to 1129 (GSVV…LSVK), 1153 to 1224 (GQCV…LVQR), 1260 to 1334 (GDIL…LSLR), 1369 to 1438 (DMGV…VTLK), and 1459 to 1529 (GDMI…LGMK). Disordered regions lie at residues 1535–1555 (NGDD…ECDP) and 1605–1652 (TDFD…LEHH). The segment covering 1620–1652 (NKDEKSKRREKQKDKEEREKKIQAAEGRLLEHH) has biased composition (basic and acidic residues). HAT repeat units lie at residues 1651 to 1683 (HHAP…FMLS), 1685 to 1722 (ADIE…LENE), 1726 to 1758 (PPEE…YERT), 1759 to 1791 (EQYK…SSLK), 1828 to 1860 (GVAD…QEIR), and 1862 to 1897 (GEDD…YEKS).

As to expression, highly expressed in flowers and at lower levels in roots, leaves, stems and siliques.

The protein resides in the nucleus. The protein localises to the nucleolus. In terms of biological role, involved in the biogenesis of ribosomal RNA (rRNA). Required for the formation of 5.8S rRNA. Required for normal development of female gametophytes. The polypeptide is rRNA biogenesis protein RRP5 (Arabidopsis thaliana (Mouse-ear cress)).